We begin with the raw amino-acid sequence, 261 residues long: ATP synthase subunit a (261 aa).

Helical transmembrane passes span 28–48 (AVHL…LTIF), 89–109 (IAPL…MDWV), 140–160 (NITF…SIKV), 203–223 (LFGN…IGVF), and 229–249 (FLWA…FMML).

The protein belongs to the ATPase A chain family. As to quaternary structure, F-type ATPases have 2 components, CF(1) - the catalytic core - and CF(0) - the membrane proton channel. CF(1) has five subunits: alpha(3), beta(3), gamma(1), delta(1), epsilon(1). CF(0) has three main subunits: a(1), b(2) and c(9-12). The alpha and beta chains form an alternating ring which encloses part of the gamma chain. CF(1) is attached to CF(0) by a central stalk formed by the gamma and epsilon chains, while a peripheral stalk is formed by the delta and b chains.

It localises to the cell inner membrane. In terms of biological role, key component of the proton channel; it plays a direct role in the translocation of protons across the membrane. The protein is ATP synthase subunit a of Colwellia psychrerythraea (strain 34H / ATCC BAA-681) (Vibrio psychroerythus).